A 313-amino-acid chain; its full sequence is UPF0761 membrane protein VS_0126 (313 aa).

6 consecutive transmembrane segments (helical) span residues 41–61, 104–124, 139–159, 185–205, 217–237, and 249–269; these read YLAY…LSIL, MTAV…SNID, AVLS…LIGA, VIRK…YLLV, AGSL…AAYI, and ALAA…IVLV. Over residues 281–290 the composition is skewed to polar residues; that stretch reads EQWSDSQEMV. The tract at residues 281–313 is disordered; that stretch reads EQWSDSQEMVHSSDKDKITEQGNNSDSTDPESK.

This sequence belongs to the UPF0761 family.

It localises to the cell inner membrane. The chain is UPF0761 membrane protein VS_0126 from Vibrio atlanticus (strain LGP32) (Vibrio splendidus (strain Mel32)).